The chain runs to 1668 residues: Chitin synthase chs-2 (1668 aa).

Residues Met1–Lys19 are compositionally biased toward basic and acidic residues. Positions Met1–Thr51 are disordered. The Cytoplasmic segment spans residues Met1 to Gln116. Residues Val117 to Ala137 form a helical membrane-spanning segment. At Lys138–His176 the chain is on the extracellular side. Residues Val177–Val197 traverse the membrane as a helical segment. The Cytoplasmic portion of the chain corresponds to Arg198–Thr212. A helical transmembrane segment spans residues Phe213–Leu233. Over Val234–Asp242 the chain is Extracellular. A helical membrane pass occupies residues Ala243 to Ile263. The Cytoplasmic segment spans residues Ser264–Ala271. A helical transmembrane segment spans residues Leu272–Leu292. The Extracellular segment spans residues Pro293–Lys301. Residues His302–Val322 form a helical membrane-spanning segment. Residues His323–Lys347 lie on the Cytoplasmic side of the membrane. The chain crosses the membrane as a helical span at residues Thr348 to Ile368. The Extracellular segment spans residues Ser369–Gln487. An N-linked (GlcNAc...) asparagine glycan is attached at Asn396. The helical transmembrane segment at Leu488–Cys508 threads the bilayer. At Tyr509–Arg522 the chain is on the cytoplasmic side. The chain crosses the membrane as a helical span at residues Met523–Asn543. Residues Cys544 to Phe576 are Extracellular-facing. A helical membrane pass occupies residues Ile577–Ile597. At His598 to Leu1045 the chain is on the cytoplasmic side. The chain crosses the membrane as a helical span at residues Val1046–Ile1066. The Extracellular portion of the chain corresponds to Ser1067–Thr1074. The chain crosses the membrane as a helical span at residues Leu1075–Ala1095. The Cytoplasmic segment spans residues Lys1096–Gln1100. A helical membrane pass occupies residues Leu1101–Gly1121. The Extracellular segment spans residues Thr1122–Ser1136. The helical transmembrane segment at Met1137 to Phe1157 threads the bilayer. Position 1158 (Thr1158) is a topological domain, cytoplasmic. The helical transmembrane segment at Cys1159–Ile1179 threads the bilayer. Residues Tyr1180–Ser1375 are Extracellular-facing. Residues Thr1192 to Asp1216 form a disordered region. The stretch at Gln1280–Tyr1335 forms a coiled coil. An N-linked (GlcNAc...) asparagine glycan is attached at Asn1303. The helical transmembrane segment at His1376 to Ile1396 threads the bilayer. Residues His1397–Pro1440 are Cytoplasmic-facing. A helical membrane pass occupies residues Ile1441–Leu1461. Residues Cys1462–Phe1668 lie on the Extracellular side of the membrane. The tract at residues Arg1625–Phe1668 is disordered. 2 stretches are compositionally biased toward polar residues: residues Thr1628–Asp1639 and Ser1647–Gly1661.

This sequence belongs to the chitin synthase family. Class IV subfamily.

The protein resides in the cell membrane. It catalyses the reaction [(1-&gt;4)-N-acetyl-beta-D-glucosaminyl](n) + UDP-N-acetyl-alpha-D-glucosamine = [(1-&gt;4)-N-acetyl-beta-D-glucosaminyl](n+1) + UDP + H(+). May be involved in chitin synthesis in the pharynx during larval development. The chain is Chitin synthase chs-2 from Caenorhabditis elegans.